The primary structure comprises 317 residues: Apolipoprotein E (317 aa).

The first 18 residues, 1–18 (MKVLWAALLVTFLAGCQA), serve as a signal peptide directing secretion. Tandem repeats lie at residues 80–101 (TLMDETMKELKAYKSELEEQLS), 102–123 (PVAEETRARLSKELQAAQARLG), 124–145 (ADMEDVRSRLVQYRSELQAMLG), 146–167 (QSTEELRARLASHLRKLRKRLL), 168–189 (RDADDLQKRLAVYQAGAREGAE), 190–211 (RGVSAIRERLGPLVEQGRVRAA), 212–233 (TVGSLASQPLQERAQALGERLR), and 234–255 (ARMEEMGSRTRDRLDEVKEQVA). The tract at residues 80 to 255 (TLMDETMKEL…RLDEVKEQVA (176 aa)) is 8 X 22 AA approximate tandem repeats. Met143 is modified (methionine sulfoxide). Ser147 is subject to Phosphoserine. Residues 158–168 (HLRKLRKRLLR) form an LDL and other lipoprotein receptors binding region. A heparin-binding site is contributed by 162–165 (LRKR). The segment at 210–290 (AATVGSLASQ…SWFEPLVEDM (81 aa)) is lipid-binding and lipoprotein association. Residue 229–236 (GERLRARM) coordinates heparin. Residues 266–317 (QQISLQAEAFQARLKSWFEPLVEDMQRQWAGLVEKVQAAVGASTAPVPSDNH) form a homooligomerization region. The specificity for association with VLDL stretch occupies residues 278–290 (RLKSWFEPLVEDM).

It belongs to the apolipoprotein A1/A4/E family. In terms of assembly, homotetramer. May interact with ABCA1; functionally associated with ABCA1 in the biogenesis of HDLs. May interact with APP/A4 amyloid-beta peptide; the interaction is extremely stable in vitro but its physiological significance is unclear. May interact with MAPT. May interact with MAP2. In the cerebrospinal fluid, interacts with secreted SORL1. Interacts with PMEL; this allows the loading of PMEL luminal fragment on ILVs to induce fibril nucleation. In terms of processing, APOE exists as multiple glycosylated and sialylated glycoforms within cells and in plasma. The extent of glycosylation and sialylation are tissue and context specific. Glycated in plasma VLDL. Post-translationally, phosphorylated by FAM20C in the extracellular medium.

The protein resides in the secreted. It is found in the extracellular space. It localises to the extracellular matrix. Its subcellular location is the extracellular vesicle. The protein localises to the endosome. The protein resides in the multivesicular body. In terms of biological role, APOE is an apolipoprotein, a protein associating with lipid particles, that mainly functions in lipoprotein-mediated lipid transport between organs via the plasma and interstitial fluids. APOE is a core component of plasma lipoproteins and is involved in their production, conversion and clearance. Apolipoproteins are amphipathic molecules that interact both with lipids of the lipoprotein particle core and the aqueous environment of the plasma. As such, APOE associates with chylomicrons, chylomicron remnants, very low density lipoproteins (VLDL) and intermediate density lipoproteins (IDL) but shows a preferential binding to high-density lipoproteins (HDL). It also binds a wide range of cellular receptors including the LDL receptor/LDLR, the LDL receptor-related proteins LRP1, LRP2 and LRP8 and the very low-density lipoprotein receptor/VLDLR that mediate the cellular uptake of the APOE-containing lipoprotein particles. Finally, APOE also has a heparin-binding activity and binds heparan-sulfate proteoglycans on the surface of cells, a property that supports the capture and the receptor-mediated uptake of APOE-containing lipoproteins by cells. A main function of APOE is to mediate lipoprotein clearance through the uptake of chylomicrons, VLDLs, and HDLs by hepatocytes. APOE is also involved in the biosynthesis by the liver of VLDLs as well as their uptake by peripheral tissues ensuring the delivery of triglycerides and energy storage in muscle, heart and adipose tissues. By participating in the lipoprotein-mediated distribution of lipids among tissues, APOE plays a critical role in plasma and tissues lipid homeostasis. APOE is also involved in two steps of reverse cholesterol transport, the HDLs-mediated transport of cholesterol from peripheral tissues to the liver, and thereby plays an important role in cholesterol homeostasis. First, it is functionally associated with ABCA1 in the biogenesis of HDLs in tissues. Second, it is enriched in circulating HDLs and mediates their uptake by hepatocytes. APOE also plays an important role in lipid transport in the central nervous system, regulating neuron survival and sprouting. The sequence is that of Apolipoprotein E (APOE) from Theropithecus gelada (Gelada baboon).